Here is a 53-residue protein sequence, read N- to C-terminus: uncharacterized protein (53 aa).

The first 23 residues, 1 to 23 (MSILLKILFKLLLLILSITFVIT), serve as a signal peptide directing secretion.

This is an uncharacterized protein from Acheta domesticus (House cricket).